The primary structure comprises 698 residues: Putative transposon gamma-delta 80.3 kDa protein (698 aa).

This chain is Putative transposon gamma-delta 80.3 kDa protein (tnpX), found in Escherichia coli (strain K12).